The primary structure comprises 146 residues: Ataxin-7-like protein 1 (146 aa).

Disordered stretches follow at residues 1 to 27 and 125 to 146; these read MTSE…QEGT and KRNA…QRQV. A compositionally biased stretch (polar residues) spans 127–138; it reads NASISWSGAESR.

The chain is Ataxin-7-like protein 1 (Atxn7l1) from Mus musculus (Mouse).